The sequence spans 481 residues: 6-phosphogluconate dehydrogenase, decarboxylating (481 aa).

Residues 11 to 16 (GLAVMG), 34 to 36 (NRT), 76 to 78 (VKA), and Asn104 each bind NADP(+). Substrate is bound by residues Asn104 and 130 to 132 (SGG). Lys184 (proton acceptor) is an active-site residue. Substrate is bound at residue 187–188 (HN). Catalysis depends on Glu191, which acts as the Proton donor. The substrate site is built by Tyr192, Lys259, Arg286, Arg445, and His451.

This sequence belongs to the 6-phosphogluconate dehydrogenase family. As to quaternary structure, homodimer.

It catalyses the reaction 6-phospho-D-gluconate + NADP(+) = D-ribulose 5-phosphate + CO2 + NADPH. Its pathway is carbohydrate degradation; pentose phosphate pathway; D-ribulose 5-phosphate from D-glucose 6-phosphate (oxidative stage): step 3/3. Functionally, catalyzes the oxidative decarboxylation of 6-phosphogluconate to ribulose 5-phosphate and CO(2), with concomitant reduction of NADP to NADPH. The chain is 6-phosphogluconate dehydrogenase, decarboxylating (Pgd) from Ceratitis capitata (Mediterranean fruit fly).